Consider the following 183-residue polypeptide: Peptide deformylase (183 aa).

2 residues coordinate Fe cation: Cys-111 and His-154. Residue Glu-155 is part of the active site. His-158 contacts Fe cation.

This sequence belongs to the polypeptide deformylase family. Requires Fe(2+) as cofactor.

It carries out the reaction N-terminal N-formyl-L-methionyl-[peptide] + H2O = N-terminal L-methionyl-[peptide] + formate. In terms of biological role, removes the formyl group from the N-terminal Met of newly synthesized proteins. Requires at least a dipeptide for an efficient rate of reaction. N-terminal L-methionine is a prerequisite for activity but the enzyme has broad specificity at other positions. This Staphylococcus epidermidis (strain ATCC 35984 / DSM 28319 / BCRC 17069 / CCUG 31568 / BM 3577 / RP62A) protein is Peptide deformylase.